Consider the following 97-residue polypeptide: Large ribosomal subunit protein bL25 (97 aa).

Belongs to the bacterial ribosomal protein bL25 family. Part of the 50S ribosomal subunit; part of the 5S rRNA/L5/L18/L25 subcomplex. Contacts the 5S rRNA. Binds to the 5S rRNA independently of L5 and L18.

Functionally, this is one of the proteins that binds to the 5S RNA in the ribosome where it forms part of the central protuberance. The sequence is that of Large ribosomal subunit protein bL25 from Buchnera aphidicola subsp. Baizongia pistaciae (strain Bp).